The primary structure comprises 499 residues: Putative antiporter subunit mnhD2 (499 aa).

14 consecutive transmembrane segments (helical) span residues 3-23 (SNLLVLPILLPLLCALVLVFT), 32-52 (ILYIGTMSVNTVISLCLLIYV), 78-98 (LSLVMVTVASFVVTLIMSYGF), 108-128 (YYLPTFILFLTTGVIGSFLTS), 130-150 (LFNLYVMFEIMLLASFVLVTL), 161-181 (IIYVVLNIVGSWLFLLGIGLL), 206-226 (IIIISIVFIVAFGSKAALVLF), 240-260 (LAALFAALMTKVGAYALIRFF), 273-293 (PLLVFMSCITMLIGAFGVIAY), 308-328 (IGFVILGLGSNTFAGVHGAIF), 330-350 (LANDIIVKTMLFFIIGSLVYM), 368-388 (FFGVAFVVMIFAIGGVPPFSG), 403-423 (GNFIGLALMIITSLLAMYSLF), and 450-470 (TILGILVAVVLAMGIAAPVVM).

This sequence belongs to the CPA3 antiporters (TC 2.A.63) subunit D family. May form a heterooligomeric complex that consists of seven subunits: mnhA2, mnhB2, mnhC2, mnhD2, mnhE2, mnhF2 and mnhG2.

The protein localises to the cell membrane. The sequence is that of Putative antiporter subunit mnhD2 (mnhD2) from Staphylococcus haemolyticus (strain JCSC1435).